The sequence spans 288 residues: SUR7 family protein pun1 (288 aa).

The Cytoplasmic portion of the chain corresponds to 1–11; that stretch reads MGMGFNPIKAL. The helical transmembrane segment at 12–32 threads the bilayer; that stretch reads FTGIGTVCVGVGALLSILCII. N-linked (GlcNAc...) asparagine glycans are attached at residues asparagine 33, asparagine 50, asparagine 59, asparagine 66, asparagine 122, asparagine 153, and asparagine 160. The Extracellular portion of the chain corresponds to 33-185; the sequence is NQTQHNIAFQ…GACYAMRAMY (153 aa). Residues 186-206 form a helical membrane-spanning segment; the sequence is ILGFIFFALTIVSIVISCLPF. Over 207–210 the chain is Cytoplasmic; sequence FGPL. Residues 211–231 form a helical membrane-spanning segment; the sequence is FLNVFSFFATIFTFIAAVIAV. Over 232–257 the chain is Extracellular; that stretch reads ATYRIAISELEKNIEILNIPIVLGKK. The helical transmembrane segment at 258 to 278 threads the bilayer; it reads IYAYSFLSAAAGLAACILYFI. The Cytoplasmic segment spans residues 279–288; it reads GNLTSGYSPL.

The protein belongs to the SUR7 family.

Its subcellular location is the golgi apparatus membrane. It localises to the cell membrane. The protein resides in the cell tip. Functionally, contributes to the wild-type cellular response to nitrogen stress through signaling pathways that regulate the expression of genes involved in amino acid biosynthesis. Required for wild-type filamentous growth, cell growth, and cell-cell adhesion. This chain is SUR7 family protein pun1 (pun1), found in Schizosaccharomyces pombe (strain 972 / ATCC 24843) (Fission yeast).